The following is an 81-amino-acid chain: RNA-binding protein Hfq (81 aa).

One can recognise a Sm domain in the interval 9–68 (DPYLNILRKERVPVSIFLVNGIKLQGQIESFDQFVILLKNTVSQMVYKHAISTVVPSRTI).

It belongs to the Hfq family. Homohexamer.

In terms of biological role, RNA chaperone that binds small regulatory RNA (sRNAs) and mRNAs to facilitate mRNA translational regulation in response to envelope stress, environmental stress and changes in metabolite concentrations. Also binds with high specificity to tRNAs. The polypeptide is RNA-binding protein Hfq (Marinomonas sp. (strain MWYL1)).